The primary structure comprises 257 residues: Isoprenyl transferase (257 aa).

D34 is an active-site residue. D34 lines the Mg(2+) pocket. Substrate is bound by residues 35–38 (GNGR), W39, R47, H51, and 79–81 (STE). N82 (proton acceptor) is an active-site residue. Substrate contacts are provided by residues W83, R85, R202, and 208 to 210 (RLS). A Mg(2+)-binding site is contributed by E221.

Belongs to the UPP synthase family. Homodimer. It depends on Mg(2+) as a cofactor.

Functionally, catalyzes the condensation of isopentenyl diphosphate (IPP) with allylic pyrophosphates generating different type of terpenoids. The chain is Isoprenyl transferase from Geobacillus kaustophilus (strain HTA426).